The chain runs to 124 residues: MSNLFRSLASSMRALSLAAPRATAVNTTKTVVSTHQTRCLSQGLLSRHICTPMCSHNRPVAVCQSAKNGLQSKQQSRGMKVHSAIKKRCEHCKVVRRKANKRQNGYLYIICPANPRHKQRQGYR.

Belongs to the bacterial ribosomal protein bL36 family. As to quaternary structure, component of the mitochondrial large ribosomal subunit (mt-LSU). Mature N.crassa 74S mitochondrial ribosomes consist of a small (37S) and a large (54S) subunit. The 37S small subunit contains a 16S ribosomal RNA (16S mt-rRNA) and 32 different proteins. The 54S large subunit contains a 23S rRNA (23S mt-rRNA) and 42 different proteins. bL36m has a zinc binding site.

It localises to the mitochondrion. Component of the mitochondrial ribosome (mitoribosome), a dedicated translation machinery responsible for the synthesis of mitochondrial genome-encoded proteins, including at least some of the essential transmembrane subunits of the mitochondrial respiratory chain. The mitoribosomes are attached to the mitochondrial inner membrane and translation products are cotranslationally integrated into the membrane. The protein is Large ribosomal subunit protein bL36m (rtc6) of Neurospora crassa (strain ATCC 24698 / 74-OR23-1A / CBS 708.71 / DSM 1257 / FGSC 987).